A 357-amino-acid chain; its full sequence is Protein ORF58 (357 aa).

Helical transmembrane passes span 20–40 (LAATPFLWCFIFKALYSFTLF), 44–64 (ITAVFFWSLPVTHLALICMCL), 78–98 (WICASAVFAAVVCAAFSGFTF), 101–121 (VPFIPGLCVLNCLLLLPYPLA), 132–152 (IVHRYYELGFCGAFMVYYLLL), 157–177 (FVSGVFWLPFIVFLVGGLLAF), 219–239 (VVVFVTLLLATLISTASIGLL), 242–262 (VLIGLDKYMTLFYVGLLSCVG), 270–290 (ALFVLLPLAAVLLTLVHILGS), 300–320 (CLCCLFLVSMLAAMGVEIQLI), and 333–353 (MVLALCTVGNLCISCLLSVIN).

This sequence belongs to the herpesviridae BMRF2 family.

Its subcellular location is the virion membrane. It is found in the host cell membrane. Participates in rearrangement of cellular actin to increase intercellular contacts and thereby promotes virus cell-to-cell spreadin$g. This chain is Protein ORF58 (ORF58), found in Homo sapiens (Human).